A 250-amino-acid polypeptide reads, in one-letter code: 4-hydroxy-tetrahydrodipicolinate reductase (250 aa).

NAD(+)-binding positions include 10–15 (GAKGRI), 78–80 (GTT), and 105–108 (APNF). His-135 acts as the Proton donor/acceptor in catalysis. His-136 is a (S)-2,3,4,5-tetrahydrodipicolinate binding site. Residue Lys-139 is the Proton donor of the active site. 145-146 (GT) lines the (S)-2,3,4,5-tetrahydrodipicolinate pocket.

The protein belongs to the DapB family.

Its subcellular location is the cytoplasm. It catalyses the reaction (S)-2,3,4,5-tetrahydrodipicolinate + NAD(+) + H2O = (2S,4S)-4-hydroxy-2,3,4,5-tetrahydrodipicolinate + NADH + H(+). The catalysed reaction is (S)-2,3,4,5-tetrahydrodipicolinate + NADP(+) + H2O = (2S,4S)-4-hydroxy-2,3,4,5-tetrahydrodipicolinate + NADPH + H(+). The protein operates within amino-acid biosynthesis; L-lysine biosynthesis via DAP pathway; (S)-tetrahydrodipicolinate from L-aspartate: step 4/4. Functionally, catalyzes the conversion of 4-hydroxy-tetrahydrodipicolinate (HTPA) to tetrahydrodipicolinate. The protein is 4-hydroxy-tetrahydrodipicolinate reductase of Streptomyces coelicolor (strain ATCC BAA-471 / A3(2) / M145).